The sequence spans 325 residues: Lipoyl synthase (325 aa).

7 residues coordinate [4Fe-4S] cluster: C72, C77, C83, C98, C102, C105, and S312. One can recognise a Radical SAM core domain in the interval 84–301; that stretch reads FAGGTATFMI…AEEGERMGFK (218 aa).

This sequence belongs to the radical SAM superfamily. Lipoyl synthase family. Requires [4Fe-4S] cluster as cofactor.

The protein localises to the cytoplasm. It carries out the reaction [[Fe-S] cluster scaffold protein carrying a second [4Fe-4S](2+) cluster] + N(6)-octanoyl-L-lysyl-[protein] + 2 oxidized [2Fe-2S]-[ferredoxin] + 2 S-adenosyl-L-methionine + 4 H(+) = [[Fe-S] cluster scaffold protein] + N(6)-[(R)-dihydrolipoyl]-L-lysyl-[protein] + 4 Fe(3+) + 2 hydrogen sulfide + 2 5'-deoxyadenosine + 2 L-methionine + 2 reduced [2Fe-2S]-[ferredoxin]. It participates in protein modification; protein lipoylation via endogenous pathway; protein N(6)-(lipoyl)lysine from octanoyl-[acyl-carrier-protein]: step 2/2. In terms of biological role, catalyzes the radical-mediated insertion of two sulfur atoms into the C-6 and C-8 positions of the octanoyl moiety bound to the lipoyl domains of lipoate-dependent enzymes, thereby converting the octanoylated domains into lipoylated derivatives. In Azotobacter vinelandii (strain DJ / ATCC BAA-1303), this protein is Lipoyl synthase.